Here is a 397-residue protein sequence, read N- to C-terminus: Acetate kinase (397 aa).

Residue asparagine 8 participates in Mg(2+) binding. Lysine 15 serves as a coordination point for ATP. Position 92 (arginine 92) interacts with substrate. Catalysis depends on aspartate 149, which acts as the Proton donor/acceptor. Residues 209–213 (HLGNG), 283–285 (DFR), and 331–335 (GVGEN) each bind ATP. Mg(2+) is bound at residue glutamate 385.

This sequence belongs to the acetokinase family. Homodimer. Mg(2+) is required as a cofactor. The cofactor is Mn(2+).

It localises to the cytoplasm. It carries out the reaction acetate + ATP = acetyl phosphate + ADP. Its pathway is metabolic intermediate biosynthesis; acetyl-CoA biosynthesis; acetyl-CoA from acetate: step 1/2. Its function is as follows. Catalyzes the formation of acetyl phosphate from acetate and ATP. Can also catalyze the reverse reaction. The polypeptide is Acetate kinase (Corynebacterium glutamicum (strain R)).